Consider the following 65-residue polypeptide: Weak toxin CM-11 (65 aa).

5 disulfide bridges follow: C3–C24, C6–C11, C17–C42, C46–C57, and C58–C63.

The protein belongs to the three-finger toxin family. Ancestral subfamily. Orphan group II sub-subfamily. In terms of tissue distribution, expressed by the venom gland.

The protein localises to the secreted. In terms of biological role, binds with low affinity to muscular (alpha-1-beta-1-delta-epsilon/CHRNA1-CHRNB1-CHRND-CHRNE) and very low affinity to neuronal (alpha-7/CHRNA7) nicotinic acetylcholine receptor (nAChR). In Naja haje haje (Egyptian cobra), this protein is Weak toxin CM-11.